The sequence spans 306 residues: N-acetylmuramic acid 6-phosphate etherase (306 aa).

Residues 59–222 (ISEALRQGGR…STGAMVQLGK (164 aa)) enclose the SIS domain. Glutamate 87 (proton donor) is an active-site residue. Glutamate 118 is an active-site residue.

The protein belongs to the GCKR-like family. MurNAc-6-P etherase subfamily. As to quaternary structure, homodimer.

It carries out the reaction N-acetyl-D-muramate 6-phosphate + H2O = N-acetyl-D-glucosamine 6-phosphate + (R)-lactate. It participates in amino-sugar metabolism; N-acetylmuramate degradation. Functionally, specifically catalyzes the cleavage of the D-lactyl ether substituent of MurNAc 6-phosphate, producing GlcNAc 6-phosphate and D-lactate. The chain is N-acetylmuramic acid 6-phosphate etherase from Gloeothece citriformis (strain PCC 7424) (Cyanothece sp. (strain PCC 7424)).